Consider the following 561-residue polypeptide: Dihydroxy-acid dehydratase 3 (561 aa).

C50 serves as a coordination point for [2Fe-2S] cluster. A Mg(2+)-binding site is contributed by D82. C123 contacts [2Fe-2S] cluster. Positions 124 and 125 each coordinate Mg(2+). N6-carboxylysine is present on K125. Residue C195 participates in [2Fe-2S] cluster binding. Position 447 (E447) interacts with Mg(2+). S473 serves as the catalytic Proton acceptor.

The protein belongs to the IlvD/Edd family. As to quaternary structure, homodimer. The cofactor is [2Fe-2S] cluster. Requires Mg(2+) as cofactor.

It carries out the reaction (2R)-2,3-dihydroxy-3-methylbutanoate = 3-methyl-2-oxobutanoate + H2O. It catalyses the reaction (2R,3R)-2,3-dihydroxy-3-methylpentanoate = (S)-3-methyl-2-oxopentanoate + H2O. It participates in amino-acid biosynthesis; L-isoleucine biosynthesis; L-isoleucine from 2-oxobutanoate: step 3/4. The protein operates within amino-acid biosynthesis; L-valine biosynthesis; L-valine from pyruvate: step 3/4. Functions in the biosynthesis of branched-chain amino acids. Catalyzes the dehydration of (2R,3R)-2,3-dihydroxy-3-methylpentanoate (2,3-dihydroxy-3-methylvalerate) into 2-oxo-3-methylpentanoate (2-oxo-3-methylvalerate) and of (2R)-2,3-dihydroxy-3-methylbutanoate (2,3-dihydroxyisovalerate) into 2-oxo-3-methylbutanoate (2-oxoisovalerate), the penultimate precursor to L-isoleucine and L-valine, respectively. The polypeptide is Dihydroxy-acid dehydratase 3 (Bordetella bronchiseptica (strain ATCC BAA-588 / NCTC 13252 / RB50) (Alcaligenes bronchisepticus)).